The following is a 272-amino-acid chain: Aquaporin-11 (272 aa).

At 1 to 14 (MTALRALWSEMQDT) the chain is on the cytoplasmic side. The helical transmembrane segment at 15–35 (CTSLGLMLSVVLLAGLARVVA) threads the bilayer. Residues 36–47 (RQQQLHRPMAHA) are Lumenal-facing. A helical membrane pass occupies residues 48–68 (FVLEFLATLQLCCCTHELLLL). Residues 69–75 (SEQEPAH) are Cytoplasmic-facing. Residues 76-96 (PTWPLTLIYFFTLVHGLTLVG) traverse the membrane as a helical segment. Topologically, residues 97 to 167 (TSSNPCGVMM…NPIQVDLPKA (71 aa)) are lumenal. Positions 100-102 (NPC) match the NPC motif. The chain crosses the membrane as a helical span at residues 168–188 (VIVEALCSFIFHSALLNFQEV). Topologically, residues 189 to 195 (RPKLRIH) are cytoplasmic. The helical transmembrane segment at 196–216 (LLAALITFLVYAGGSLTGAVF) threads the bilayer. Positions 217-219 (NPA) match the NPA motif. At 217–235 (NPALALSLHFKCFDEAFLQ) the chain is on the lumenal side. A helical transmembrane segment spans residues 236–256 (FFIVYWLAPSLGILLMILMFS). Topologically, residues 257–272 (FFLPWLYNNHTINKKE) are cytoplasmic.

This sequence belongs to the MIP/aquaporin (TC 1.A.8) family. AQP11/AQP12 subfamily. As to quaternary structure, homodimer; disulfide-linked. Homotetramer. Can also form homomultimer. Post-translationally, not glycosylated. In terms of tissue distribution, expressed in retina specifically at retinal Mueller glial cells.

Its subcellular location is the endoplasmic reticulum membrane. It localises to the cytoplasmic vesicle membrane. It is found in the cell membrane. The enzyme catalyses H2O(in) = H2O(out). The catalysed reaction is glycerol(in) = glycerol(out). It catalyses the reaction H2O2(out) = H2O2(in). Channel protein that facilitates the transport of water, glycerol and hydrogen peroxide across membrane of cell or organelles guaranteeing intracellular homeostasis in several organes like liver, kidney and brain. In situation of stress, participates in endoplasmic reticulum (ER) homeostasis by regulating redox homeostasis through the transport of hydrogen peroxide across the endoplasmic reticulum membrane thereby regulating the oxidative stress through the NADPH oxidase 2 pathway. Plays a role by maintaining an environment suitable for translation or protein foldings in the ER lumen namely by participating in the PKD1 glycosylation processing resulting in regulation of PKD1 membrane trafficking thereby preventing the accumulation of unfolding protein in ER. Plays a role in the proximal tubule function by regulating its endosomal acidification. May play a role in postnatal kidney development. This chain is Aquaporin-11, found in Equus caballus (Horse).